The chain runs to 583 residues: Putative glutaminase 3 (583 aa).

The segment at 1–29 (MDNKEKEDEELSDELKDQPGPSEKPRTPT) is disordered. The substrate site is built by S216, N265, E311, N318, Y344, Y396, and V414. ANK repeat units follow at residues 482–514 (DGQN…CKDY), 515–548 (DDRT…PCDR), and 549–581 (YDRT…LKGQ).

Belongs to the glutaminase family.

The enzyme catalyses L-glutamine + H2O = L-glutamate + NH4(+). The protein is Putative glutaminase 3 (glna-3) of Caenorhabditis elegans.